The sequence spans 366 residues: S-adenosylmethionine:tRNA ribosyltransferase-isomerase (366 aa).

Belongs to the QueA family. Monomer.

The protein localises to the cytoplasm. It carries out the reaction 7-aminomethyl-7-carbaguanosine(34) in tRNA + S-adenosyl-L-methionine = epoxyqueuosine(34) in tRNA + adenine + L-methionine + 2 H(+). The protein operates within tRNA modification; tRNA-queuosine biosynthesis. Functionally, transfers and isomerizes the ribose moiety from AdoMet to the 7-aminomethyl group of 7-deazaguanine (preQ1-tRNA) to give epoxyqueuosine (oQ-tRNA). The polypeptide is S-adenosylmethionine:tRNA ribosyltransferase-isomerase (Methylorubrum populi (strain ATCC BAA-705 / NCIMB 13946 / BJ001) (Methylobacterium populi)).